Reading from the N-terminus, the 528-residue chain is Peptide chain release factor 3 (528 aa).

Positions 11–279 (SDRRTFAIIS…GFVEWAPAPI (269 aa)) constitute a tr-type G domain. Residues 20 to 27 (SHPDAGKT), 88 to 92 (DTPGH), and 142 to 145 (NKMD) contribute to the GTP site.

The protein belongs to the TRAFAC class translation factor GTPase superfamily. Classic translation factor GTPase family. PrfC subfamily.

Its subcellular location is the cytoplasm. In terms of biological role, increases the formation of ribosomal termination complexes and stimulates activities of RF-1 and RF-2. It binds guanine nucleotides and has strong preference for UGA stop codons. It may interact directly with the ribosome. The stimulation of RF-1 and RF-2 is significantly reduced by GTP and GDP, but not by GMP. This is Peptide chain release factor 3 from Marinomonas sp. (strain MWYL1).